The sequence spans 423 residues: Gamma-glutamyl phosphate reductase (423 aa).

It belongs to the gamma-glutamyl phosphate reductase family.

It is found in the cytoplasm. It catalyses the reaction L-glutamate 5-semialdehyde + phosphate + NADP(+) = L-glutamyl 5-phosphate + NADPH + H(+). It participates in amino-acid biosynthesis; L-proline biosynthesis; L-glutamate 5-semialdehyde from L-glutamate: step 2/2. Its function is as follows. Catalyzes the NADPH-dependent reduction of L-glutamate 5-phosphate into L-glutamate 5-semialdehyde and phosphate. The product spontaneously undergoes cyclization to form 1-pyrroline-5-carboxylate. The protein is Gamma-glutamyl phosphate reductase of Pseudomonas putida (strain ATCC 47054 / DSM 6125 / CFBP 8728 / NCIMB 11950 / KT2440).